The following is a 125-amino-acid chain: Large ribosomal subunit protein bL19 (125 aa).

This sequence belongs to the bacterial ribosomal protein bL19 family.

This protein is located at the 30S-50S ribosomal subunit interface and may play a role in the structure and function of the aminoacyl-tRNA binding site. This is Large ribosomal subunit protein bL19 from Wolbachia pipientis wMel.